Reading from the N-terminus, the 467-residue chain is 2-succinylbenzoate--CoA ligase (467 aa).

Belongs to the ATP-dependent AMP-binding enzyme family. MenE subfamily.

It carries out the reaction 2-succinylbenzoate + ATP + CoA = 2-succinylbenzoyl-CoA + AMP + diphosphate. It functions in the pathway quinol/quinone metabolism; 1,4-dihydroxy-2-naphthoate biosynthesis; 1,4-dihydroxy-2-naphthoate from chorismate: step 5/7. It participates in quinol/quinone metabolism; menaquinone biosynthesis. In terms of biological role, converts 2-succinylbenzoate (OSB) to 2-succinylbenzoyl-CoA (OSB-CoA). The protein is 2-succinylbenzoate--CoA ligase of Listeria innocua serovar 6a (strain ATCC BAA-680 / CLIP 11262).